The sequence spans 103 residues: Large ribosomal subunit protein P1 (103 aa).

A disordered region spans residues 66–103; the sequence is PAAGAPAAGAAGGAVEEKKEEKKAESEDESDDDMGLFD. Residues 80 to 90 show a composition bias toward basic and acidic residues; it reads VEEKKEEKKAE. The span at 91–103 shows a compositional bias: acidic residues; that stretch reads SEDESDDDMGLFD.

It belongs to the eukaryotic ribosomal protein P1/P2 family. P1 and P2 exist as dimers at the large ribosomal subunit.

Its function is as follows. Plays an important role in the elongation step of protein synthesis. The protein is Large ribosomal subunit protein P1 of Polyorchis penicillatus (Hydromedusa).